The following is a 29-amino-acid chain: GLWSKIKEAGKAAVKAAGKAALGAVANSV.

Residue V29 is modified to Valine amide.

As to expression, expressed by the skin glands.

It localises to the secreted. Its function is as follows. Has antimicrobial activity. The protein is Dermaseptin-J5 of Phasmahyla jandaia (Jandaia leaf frog).